Reading from the N-terminus, the 433-residue chain is Trigger factor (433 aa).

The 86-residue stretch at 161-246 (NDRVIIDFVG…LNKVENMILP (86 aa)) folds into the PPIase FKBP-type domain.

Belongs to the FKBP-type PPIase family. Tig subfamily.

It localises to the cytoplasm. It catalyses the reaction [protein]-peptidylproline (omega=180) = [protein]-peptidylproline (omega=0). In terms of biological role, involved in protein export. Acts as a chaperone by maintaining the newly synthesized protein in an open conformation. Functions as a peptidyl-prolyl cis-trans isomerase. The polypeptide is Trigger factor (Haemophilus ducreyi (strain 35000HP / ATCC 700724)).